A 366-amino-acid chain; its full sequence is Chorismate synthase (366 aa).

Residues R47 and R53 each coordinate NADP(+). FMN contacts are provided by residues 124-126 (RSS), G286, 301-305 (KPTAT), and R327.

The protein belongs to the chorismate synthase family. As to quaternary structure, homotetramer. FMNH2 serves as cofactor.

It catalyses the reaction 5-O-(1-carboxyvinyl)-3-phosphoshikimate = chorismate + phosphate. Its pathway is metabolic intermediate biosynthesis; chorismate biosynthesis; chorismate from D-erythrose 4-phosphate and phosphoenolpyruvate: step 7/7. Its function is as follows. Catalyzes the anti-1,4-elimination of the C-3 phosphate and the C-6 proR hydrogen from 5-enolpyruvylshikimate-3-phosphate (EPSP) to yield chorismate, which is the branch point compound that serves as the starting substrate for the three terminal pathways of aromatic amino acid biosynthesis. This reaction introduces a second double bond into the aromatic ring system. In Microcystis aeruginosa (strain NIES-843 / IAM M-2473), this protein is Chorismate synthase.